A 604-amino-acid polypeptide reads, in one-letter code: Putative sodium-dependent multivitamin transporter (604 aa).

6 consecutive transmembrane segments (helical) span residues 4 to 24 (LGAWDYTILAVVLIISVAIGI), 48 to 68 (VAPVAFSLMASFMSAVTILGV), 78 to 98 (MFVVINLSYVLSTPVAAYLII), 134 to 154 (VLYMGIVVYAPALALEAVTGL), 160 to 180 (IVIVGVVCTFYATLGGMKAVL), and 188 to 208 (LLMFAAVFSVIICAWVKAGSL). 2 N-linked (GlcNAc...) asparagine glycosylation sites follow: asparagine 222 and asparagine 225. Helical transmembrane passes span 234–254 (HTWFTQILGGCATYLAIYGVN), 273–293 (ALWWCLPILCLLSLSTCFSGL), 331–351 (LAGLFVSGIFCASLSTISSII), 389–409 (LFFGALCIGMAFMAGSIGGLL), 413–433 (LSIFGIIGGPLLGLFTLGMYV), 440–460 (GAIGGLLISLAFCFWIGFGQP), and 511–531 (ALGFLITFFGGWLLSWLFALL).

The protein belongs to the sodium:solute symporter (SSF) (TC 2.A.21) family.

Its subcellular location is the cell membrane. In Drosophila melanogaster (Fruit fly), this protein is Putative sodium-dependent multivitamin transporter.